A 78-amino-acid chain; its full sequence is Large ribosomal subunit protein eL20 (78 aa).

The protein belongs to the eukaryotic ribosomal protein eL20 family. Part of the 50S ribosomal subunit. Binds 23S rRNA.

The protein is Large ribosomal subunit protein eL20 of Pyrobaculum arsenaticum (strain DSM 13514 / JCM 11321 / PZ6).